The following is a 1008-amino-acid chain: DNA polymerase catalytic subunit (1008 aa).

This sequence belongs to the DNA polymerase type-B family.

It is found in the host nucleus. The catalysed reaction is DNA(n) + a 2'-deoxyribonucleoside 5'-triphosphate = DNA(n+1) + diphosphate. In Equine herpesvirus 2 (strain 86/87) (EHV-2), this protein is DNA polymerase catalytic subunit (9).